A 346-amino-acid chain; its full sequence is D-erythrose-4-phosphate dehydrogenase (346 aa).

Residue 11–12 (RI) participates in NAD(+) binding. Substrate-binding positions include 163 to 165 (SCT), Arg209, 222 to 223 (TK), and Arg245. The active-site Nucleophile is the Cys164. Residue Asn327 participates in NAD(+) binding.

The protein belongs to the glyceraldehyde-3-phosphate dehydrogenase family. Epd subfamily. In terms of assembly, homotetramer.

The protein localises to the cytoplasm. The catalysed reaction is D-erythrose 4-phosphate + NAD(+) + H2O = 4-phospho-D-erythronate + NADH + 2 H(+). It functions in the pathway cofactor biosynthesis; pyridoxine 5'-phosphate biosynthesis; pyridoxine 5'-phosphate from D-erythrose 4-phosphate: step 1/5. Functionally, catalyzes the NAD-dependent conversion of D-erythrose 4-phosphate to 4-phosphoerythronate. The polypeptide is D-erythrose-4-phosphate dehydrogenase (Vibrio vulnificus (strain CMCP6)).